Reading from the N-terminus, the 314-residue chain is Glutamyl-Q tRNA(Asp) synthetase (314 aa).

Residues 14–18 (RFAPS) and E50 each bind L-glutamate. The short motif at 17–27 (PSPTGPLHVGS) is the 'HIGH' region element. The Zn(2+) site is built by C106, C108, Y129, and C133. Positions 187 and 205 each coordinate L-glutamate. Residues 243-247 (KLSKR) carry the 'KMSKS' region motif. K246 contributes to the ATP binding site.

This sequence belongs to the class-I aminoacyl-tRNA synthetase family. GluQ subfamily. Zn(2+) serves as cofactor.

Functionally, catalyzes the tRNA-independent activation of glutamate in presence of ATP and the subsequent transfer of glutamate onto a tRNA(Asp). Glutamate is transferred on the 2-amino-5-(4,5-dihydroxy-2-cyclopenten-1-yl) moiety of the queuosine in the wobble position of the QUC anticodon. In Geobacter sulfurreducens (strain ATCC 51573 / DSM 12127 / PCA), this protein is Glutamyl-Q tRNA(Asp) synthetase.